A 183-amino-acid polypeptide reads, in one-letter code: Ribosome rescue factor SmrB (183 aa).

The Smr domain occupies 98–173 (LDLHGLTQLQ…GDAALLVLIE (76 aa)).

Belongs to the SmrB family. In terms of assembly, associates with collided ribosomes, but not with correctly translating polysomes.

Its function is as follows. Acts as a ribosome collision sensor. Detects stalled/collided disomes (pairs of ribosomes where the leading ribosome is stalled and a second ribosome has collided with it) and endonucleolytically cleaves mRNA at the 5' boundary of the stalled ribosome. Stalled/collided disomes form a new interface (primarily via the 30S subunits) that binds SmrB. Cleaved mRNA becomes available for tmRNA ligation, leading to ribosomal subunit dissociation and rescue of stalled ribosomes. In Shigella dysenteriae serotype 1 (strain Sd197), this protein is Ribosome rescue factor SmrB.